A 367-amino-acid chain; its full sequence is Ribosomal lysine N-methyltransferase 5 (367 aa).

Residues W110, 170–172, D192, W256, and M288 contribute to the S-adenosyl-L-methionine site; that span reads GAG.

Belongs to the class I-like SAM-binding methyltransferase superfamily. RKM5 family.

Its function is as follows. S-adenosyl-L-methionine-dependent protein-lysine N-methyltransferase that monomethylates 60S ribosomal protein L1 (RPL1A and RPL1B) at 'Lys-46'. This is Ribosomal lysine N-methyltransferase 5 (RKM5) from Saccharomyces cerevisiae (strain JAY291) (Baker's yeast).